The following is a 428-amino-acid chain: Elongation factor 1-alpha (428 aa).

The 213-residue stretch at 5 to 217 folds into the tr-type G domain; the sequence is KPHVNIVFIG…DQIPEPEKPV (213 aa). Residues 14 to 21 are G1; the sequence is GHVDHGKS. Residue 14 to 21 participates in GTP binding; sequence GHVDHGKS. Serine 21 serves as a coordination point for Mg(2+). Positions 68-72 are G2; sequence GITID. The tract at residues 89–92 is G3; sequence DAPG. Residues 89-93 and 144-147 contribute to the GTP site; these read DAPGH and NKMD. A G4 region spans residues 144–147; it reads NKMD. The tract at residues 181–183 is G5; the sequence is SAW.

The protein belongs to the TRAFAC class translation factor GTPase superfamily. Classic translation factor GTPase family. EF-Tu/EF-1A subfamily.

The protein resides in the cytoplasm. It carries out the reaction GTP + H2O = GDP + phosphate + H(+). Its function is as follows. GTP hydrolase that promotes the GTP-dependent binding of aminoacyl-tRNA to the A-site of ribosomes during protein biosynthesis. The sequence is that of Elongation factor 1-alpha from Pyrococcus furiosus (strain ATCC 43587 / DSM 3638 / JCM 8422 / Vc1).